We begin with the raw amino-acid sequence, 366 residues long: Peptide chain release factor 2 (366 aa).

Gln-251 bears the N5-methylglutamine mark.

This sequence belongs to the prokaryotic/mitochondrial release factor family. Post-translationally, methylated by PrmC. Methylation increases the termination efficiency of RF2.

The protein localises to the cytoplasm. Its function is as follows. Peptide chain release factor 2 directs the termination of translation in response to the peptide chain termination codons UGA and UAA. The polypeptide is Peptide chain release factor 2 (prfB) (Bacillus subtilis (strain 168)).